The chain runs to 615 residues: MIYMGGIVGNNSLLAKIGDYGEIEYLFYPQVGYETHFFDSALAVYDKKVKWHWDDDWDITQKYIEETNIFKTILEDDKIILTIKDFVPVSHNVLIRRVYIKNKLDKKLNFKLFFYENLRIGENPITNTVKFLEDGCIVKYNGKYIFCIGSDKRIDSFQCGNRYSKTSAYIDIENGILKEHKESSGLLTDSAISWNIKIDEKRSLAFNIYILPQRFDGDFSIITEQLKIIMNNSENIKNLSMNYWKHIIGEINRFIHPELRQNNKIYSITKRALMTLLMLCDKEGGIIAAPSLHPDYRYVWGRDGSYISIALDLFGIRNIPDRFFEFMSKIQNADGSWLQNYYVNGKPRLTAIQTDQIGSILWAMDVHYRLTGDRKFVERYWNTIEKAANYLRLVALNFTPCFDLWEERFGVFAYTMGATYAGLKCAYSMSKAVNKRDKVKDWGKTIEFLKHEVPKRFYLEDEERFAKSINPLDKTIDTSILGLSYPFNLIDVDDERMIKTAEAIEKAFKYKVGGIGRYPEDIYFGGNPWIITTLWLSLYYRRLYKVLKEKDDNGADIYLQKSKKLFNWVMKYSFDGLFPEQIHKELGVPMSAMPLGWSNAMFLIYVYENDKVIIP.

The active-site Proton acceptor is the Asp-403. Glu-406 (proton donor) is an active-site residue.

It belongs to the glycosyl hydrolase 15 family.

This is an uncharacterized protein from Methanocaldococcus jannaschii (strain ATCC 43067 / DSM 2661 / JAL-1 / JCM 10045 / NBRC 100440) (Methanococcus jannaschii).